The sequence spans 130 residues: Small ribosomal subunit protein uS11 (130 aa).

This sequence belongs to the universal ribosomal protein uS11 family. As to quaternary structure, part of the 30S ribosomal subunit. Interacts with proteins S7 and S18. Binds to IF-3.

Located on the platform of the 30S subunit, it bridges several disparate RNA helices of the 16S rRNA. Forms part of the Shine-Dalgarno cleft in the 70S ribosome. This Campylobacter fetus subsp. fetus (strain 82-40) protein is Small ribosomal subunit protein uS11.